We begin with the raw amino-acid sequence, 303 residues long: Protein bottleneck (303 aa).

Disordered stretches follow at residues 102 to 142 (SKRN…PTVT) and 185 to 272 (VATT…ASVR). Low complexity-rich tracts occupy residues 115–138 (RQQEQRQPQEQPLQQEELQHQQQE) and 185–197 (VATTTANSSTANS). Over residues 260–272 (ATISRQSSSASVR) the composition is skewed to polar residues.

Restricted to the blastoderm.

Its subcellular location is the cytoplasm. It localises to the cytoskeleton. In terms of biological role, acts as a regulator of the microfilament network governing cellularization of the embryo. Determines the timing of a key conformational transition in the cortical microfilament network: the proper coordination of membrane invagination and basal closure of the cells. To do this, bnk possibly physically links neighboring contractile units of the early cycle 14 microfilament network in a manner that prevents basal constriction until the proper stage has been reached. Bnk together with nullo and Sry-alpha may provide auxiliary functions, by acting both to stabilize a large and dynamic microfilament structure and regulate its functions. The sequence is that of Protein bottleneck (bnk) from Drosophila melanogaster (Fruit fly).